A 505-amino-acid polypeptide reads, in one-letter code: ATP synthase subunit alpha (505 aa).

169-176 (GDRQTGKT) contributes to the ATP binding site.

It belongs to the ATPase alpha/beta chains family. In terms of assembly, F-type ATPases have 2 components, CF(1) - the catalytic core - and CF(0) - the membrane proton channel. CF(1) has five subunits: alpha(3), beta(3), gamma(1), delta(1), epsilon(1). CF(0) has three main subunits: a(1), b(2) and c(9-12). The alpha and beta chains form an alternating ring which encloses part of the gamma chain. CF(1) is attached to CF(0) by a central stalk formed by the gamma and epsilon chains, while a peripheral stalk is formed by the delta and b chains.

It localises to the cell membrane. It carries out the reaction ATP + H2O + 4 H(+)(in) = ADP + phosphate + 5 H(+)(out). In terms of biological role, produces ATP from ADP in the presence of a proton gradient across the membrane. The alpha chain is a regulatory subunit. In Alkaliphilus oremlandii (strain OhILAs) (Clostridium oremlandii (strain OhILAs)), this protein is ATP synthase subunit alpha.